The primary structure comprises 264 residues: N-carbamoylsarcosine amidase (264 aa).

The active-site Nucleophile is C177. The disordered stretch occupies residues 240 to 264 (TVPKTLSDPQPEVEAPADPVFAEQH).

Homotetramer. Sulfate is required as a cofactor.

The enzyme catalyses N-carbamoylsarcosine + H2O + 2 H(+) = sarcosine + NH4(+) + CO2. The protein operates within amine and polyamine degradation; creatinine degradation; sarcosine from creatinine: step 3/3. The protein is N-carbamoylsarcosine amidase of Arthrobacter sp.